Consider the following 198-residue polypeptide: Ribonuclease HII (198 aa).

One can recognise an RNase H type-2 domain in the interval 11 to 198 (NLIAGVDEVG…GPVKRVLGLV (188 aa)). Residues Asp17, Glu18, and Asp109 each coordinate a divalent metal cation.

Belongs to the RNase HII family. Mn(2+) is required as a cofactor. The cofactor is Mg(2+).

The protein resides in the cytoplasm. It catalyses the reaction Endonucleolytic cleavage to 5'-phosphomonoester.. Functionally, endonuclease that specifically degrades the RNA of RNA-DNA hybrids. The chain is Ribonuclease HII from Yersinia pseudotuberculosis serotype O:1b (strain IP 31758).